The primary structure comprises 471 residues: Tyrosine--tRNA ligase (471 aa).

L-tyrosine is bound at residue Tyr41. Positions 46–55 match the 'HIGH' region motif; sequence PTAPSLHVGN. L-tyrosine-binding residues include Tyr176 and Gln180. The 'KMSKS' region motif lies at 236–240; that stretch reads KFGKT. Residue Lys239 participates in ATP binding. In terms of domain architecture, S4 RNA-binding spans 403 to 471; sequence DLITHILQKV…GKKHLAAVFY (69 aa).

It belongs to the class-I aminoacyl-tRNA synthetase family. TyrS type 1 subfamily. As to quaternary structure, homodimer.

Its subcellular location is the cytoplasm. The catalysed reaction is tRNA(Tyr) + L-tyrosine + ATP = L-tyrosyl-tRNA(Tyr) + AMP + diphosphate + H(+). Catalyzes the attachment of tyrosine to tRNA(Tyr) in a two-step reaction: tyrosine is first activated by ATP to form Tyr-AMP and then transferred to the acceptor end of tRNA(Tyr). This Tropheryma whipplei (strain Twist) (Whipple's bacillus) protein is Tyrosine--tRNA ligase.